Consider the following 618-residue polypeptide: UvrABC system protein C (618 aa).

Residues 19 to 97 (SEPGIYRMLD…IKALRPKYNV (79 aa)) form the GIY-YIG domain. The region spanning 208-243 (QIILDELAERMKNAVSQLNFEEAAVLRDQIKNLRLI) is the UVR domain.

It belongs to the UvrC family. In terms of assembly, interacts with UvrB in an incision complex.

Its subcellular location is the cytoplasm. The UvrABC repair system catalyzes the recognition and processing of DNA lesions. UvrC both incises the 5' and 3' sides of the lesion. The N-terminal half is responsible for the 3' incision and the C-terminal half is responsible for the 5' incision. The chain is UvrABC system protein C from Legionella pneumophila (strain Lens).